The following is a 206-amino-acid chain: High frequency lysogenization protein HflD homolog (206 aa).

This sequence belongs to the HflD family.

Its subcellular location is the cytoplasm. The protein resides in the cell inner membrane. In Pseudomonas paraeruginosa (strain DSM 24068 / PA7) (Pseudomonas aeruginosa (strain PA7)), this protein is High frequency lysogenization protein HflD homolog.